The chain runs to 156 residues: Snaclec A10 (156 aa).

The N-terminal stretch at 1–23 (MGRSISVSFGLLVVFLSLSGIGA) is a signal peptide. 3 disulfides stabilise this stretch: Cys27–Cys38, Cys55–Cys154, and Cys129–Cys146. Residues 34–155 (YDQHCYQAVD…CGQPYRFTCE (122 aa)) form the C-type lectin domain.

Belongs to the snaclec family. As to quaternary structure, heterodimer; disulfide-linked. In terms of tissue distribution, expressed by the venom gland.

It localises to the secreted. Functionally, interferes with one step of hemostasis (modulation of platelet aggregation, or coagulation cascade, for example). In Macrovipera lebetinus (Levantine viper), this protein is Snaclec A10.